Here is a 198-residue protein sequence, read N- to C-terminus: Transcriptional regulator GfcR (198 aa).

This sequence belongs to the purine/pyrimidine phosphoribosyltransferase family. GfcR subfamily.

In Methanocorpusculum labreanum (strain ATCC 43576 / DSM 4855 / Z), this protein is Transcriptional regulator GfcR.